Reading from the N-terminus, the 757-residue chain is RNA-directed RNA polymerase catalytic subunit (757 aa).

A disordered region spans residues 52-82 (KGKWTTNTETGAPQLNPIDGPLPEDNEPSGY). Over residues 55 to 64 (WTTNTETGAP) the composition is skewed to polar residues. Short sequence motifs (nuclear localization signal) lie at residues 187–195 (RKRRVRDNM) and 203–216 (RTIG…NKKS). The promoter-binding site stretch occupies residues 249 to 256 (RGFVYFVE). A RdRp catalytic domain is found at 286-483 (VRKMMTNSQD…GINMSKKKSY (198 aa)).

The protein belongs to the influenza viruses polymerase PB1 family. Influenza RNA polymerase is composed of three subunits: PB1, PB2 and PA. Interacts (via N-terminus) with PA (via C-terminus). Interacts (via C-terminus) with PB2 (via N-terminus); this interaction is essential for transcription initiation. In terms of processing, phosphorylated by host PRKCA.

The protein localises to the host nucleus. Its subcellular location is the host cytoplasm. The enzyme catalyses RNA(n) + a ribonucleoside 5'-triphosphate = RNA(n+1) + diphosphate. Its function is as follows. RNA-dependent RNA polymerase which is responsible for replication and transcription of virus RNA segments. The transcription of viral mRNAs occurs by a unique mechanism called cap-snatching. 5' methylated caps of cellular mRNAs are cleaved after 10-13 nucleotides by PA. In turn, these short capped RNAs are used as primers by PB1 for transcription of viral mRNAs. During virus replication, PB1 initiates RNA synthesis and copy vRNA into complementary RNA (cRNA) which in turn serves as a template for the production of more vRNAs. The polypeptide is RNA-directed RNA polymerase catalytic subunit (Influenza A virus (strain A/Chicken/Shantou/4231/2003 H5N1 genotype V)).